The sequence spans 155 residues: Small ribosomal subunit protein uS7cz/uS7cy (155 aa).

It belongs to the universal ribosomal protein uS7 family. Part of the 30S ribosomal subunit.

Its subcellular location is the plastid. The protein resides in the chloroplast. In terms of biological role, one of the primary rRNA binding proteins, it binds directly to 16S rRNA where it nucleates assembly of the head domain of the 30S subunit. The sequence is that of Small ribosomal subunit protein uS7cz/uS7cy (rps7-A) from Guizotia abyssinica (Niger).